Reading from the N-terminus, the 446-residue chain is Probable glycine dehydrogenase (decarboxylating) subunit 1 (446 aa).

This sequence belongs to the GcvP family. N-terminal subunit subfamily. In terms of assembly, the glycine cleavage system is composed of four proteins: P, T, L and H. In this organism, the P 'protein' is a heterodimer of two subunits.

The enzyme catalyses N(6)-[(R)-lipoyl]-L-lysyl-[glycine-cleavage complex H protein] + glycine + H(+) = N(6)-[(R)-S(8)-aminomethyldihydrolipoyl]-L-lysyl-[glycine-cleavage complex H protein] + CO2. Its function is as follows. The glycine cleavage system catalyzes the degradation of glycine. The P protein binds the alpha-amino group of glycine through its pyridoxal phosphate cofactor; CO(2) is released and the remaining methylamine moiety is then transferred to the lipoamide cofactor of the H protein. This chain is Probable glycine dehydrogenase (decarboxylating) subunit 1, found in Protochlamydia amoebophila (strain UWE25).